We begin with the raw amino-acid sequence, 119 residues long: Large ribosomal subunit protein bL20c (119 aa).

Belongs to the bacterial ribosomal protein bL20 family.

The protein localises to the plastid. Its subcellular location is the chloroplast. Its function is as follows. Binds directly to 23S ribosomal RNA and is necessary for the in vitro assembly process of the 50S ribosomal subunit. It is not involved in the protein synthesizing functions of that subunit. This Triticum aestivum (Wheat) protein is Large ribosomal subunit protein bL20c.